The sequence spans 463 residues: Glutamate--tRNA ligase 2 (463 aa).

The short motif at 10–20 (PSPTGFLHIGS) is the 'HIGH' region element. The 'KMSKS' region motif lies at 239-243 (KLSKR). ATP is bound at residue lysine 242.

The protein belongs to the class-I aminoacyl-tRNA synthetase family. Glutamate--tRNA ligase type 1 subfamily. As to quaternary structure, monomer.

The protein localises to the cytoplasm. The catalysed reaction is tRNA(Glu) + L-glutamate + ATP = L-glutamyl-tRNA(Glu) + AMP + diphosphate. Catalyzes the attachment of glutamate to tRNA(Glu) in a two-step reaction: glutamate is first activated by ATP to form Glu-AMP and then transferred to the acceptor end of tRNA(Glu). The sequence is that of Glutamate--tRNA ligase 2 from Rickettsia akari (strain Hartford).